The primary structure comprises 179 residues: Small heat shock protein hspK (179 aa).

The sHSP domain occupies 32-178; it reads HRINIWRPTV…DRLKIPIQSK (147 aa). Positions 80-122 are disordered; it reads KKSKGGLNNLPSSSSSINSDSTTNTNTNTTTTTTTAPPPPSDA. Residues 87-114 show a composition bias toward low complexity; that stretch reads NNLPSSSSSINSDSTTNTNTNTTTTTTT.

It belongs to the small heat shock protein (HSP20) family.

The chain is Small heat shock protein hspK (hspK) from Dictyostelium discoideum (Social amoeba).